A 173-amino-acid chain; its full sequence is Phosphopantetheine adenylyltransferase (173 aa).

Substrate is bound at residue T9. Residues 9-10 and H17 contribute to the ATP site; that span reads TF. K41, T75, and R89 together coordinate substrate. Residues 90–92, E100, and 125–131 each bind ATP; these read GLR and HIYLSSS.

It belongs to the bacterial CoaD family. Homohexamer. Requires Mg(2+) as cofactor.

Its subcellular location is the cytoplasm. The enzyme catalyses (R)-4'-phosphopantetheine + ATP + H(+) = 3'-dephospho-CoA + diphosphate. The protein operates within cofactor biosynthesis; coenzyme A biosynthesis; CoA from (R)-pantothenate: step 4/5. Reversibly transfers an adenylyl group from ATP to 4'-phosphopantetheine, yielding dephospho-CoA (dPCoA) and pyrophosphate. The chain is Phosphopantetheine adenylyltransferase from Methylacidiphilum infernorum (isolate V4) (Methylokorus infernorum (strain V4)).